The primary structure comprises 236 residues: uncharacterized protein (236 aa).

The HTH gntR-type domain maps to 5–73; sequence QSTVENAKEK…DRKGWFVTQP (69 aa). The segment at residues 33–52 is a DNA-binding region (H-T-H motif); that stretch reads ERELGELLGIKRMTLRQALL.

This is an uncharacterized protein from Escherichia coli O157:H7.